The sequence spans 338 residues: UDP-glucose 4-epimerase (338 aa).

NAD(+) is bound by residues 11-12, 31-36, 58-59, 80-84, N99, S124, Y149, K153, and F178; these read YI, DNLCNS, DI, and FAGLK. Substrate contacts are provided by S124 and Y149. Catalysis depends on Y149, which acts as the Proton acceptor. Residues N179, 199–200, 216–218, R231, 292–295, and Y299 each bind substrate; these read NL, AVF, and RDGD.

This sequence belongs to the NAD(P)-dependent epimerase/dehydratase family. In terms of assembly, homodimer. NAD(+) is required as a cofactor.

It carries out the reaction UDP-alpha-D-glucose = UDP-alpha-D-galactose. It participates in carbohydrate metabolism; galactose metabolism. Functionally, involved in the metabolism of galactose. Catalyzes the conversion of UDP-galactose (UDP-Gal) to UDP-glucose (UDP-Glc) through a mechanism involving the transient reduction of NAD. In Salmonella typhimurium (strain LT2 / SGSC1412 / ATCC 700720), this protein is UDP-glucose 4-epimerase (galE).